Reading from the N-terminus, the 82-residue chain is Escargot/snail protein homolog (82 aa).

4 consecutive C2H2-type zinc fingers follow at residues 1-5 (HLQFH), 18-40 (FSCKLCDKVYTSLGALKMHIRTH), 44-66 (CKCDICHKAFSRPWLLQGHIRTH), and 72-82 (FSCQHCHRAFA).

This sequence belongs to the snail C2H2-type zinc-finger protein family.

It localises to the nucleus. In Bradysia coprophila (Dark-winged fungus gnat), this protein is Escargot/snail protein homolog.